The following is a 209-amino-acid chain: Thymidine kinase (209 aa).

ATP contacts are provided by residues 16–23 (GPMFAGKT) and 90–93 (DESQ). Glu-91 (proton acceptor) is an active-site residue.

Belongs to the thymidine kinase family. Homotetramer.

Its subcellular location is the cytoplasm. It carries out the reaction thymidine + ATP = dTMP + ADP + H(+). In Aster yellows witches'-broom phytoplasma (strain AYWB), this protein is Thymidine kinase.